The primary structure comprises 158 residues: Globin CTT-I/CTT-IA (158 aa).

Positions 1-15 (MKFLILALCVAAAMA) are cleaved as a signal peptide. In terms of domain architecture, Globin spans 16 to 158 (GPSGDQIAAA…FVFSTLKNEL (143 aa)). Heme b-binding residues include His74 and His109.

It belongs to the globin family. As to quaternary structure, monomer.

The protein is Globin CTT-I/CTT-IA (CTT-1) of Chironomus thummi thummi (Midge).